Consider the following 326-residue polypeptide: MEEIIAPISKEILKAELSEDKRLRFTNKSHNEIYVITYQDSPNVMKEIGRLREIAFRAAGGGTGKAMDIDEYDVMENPYKQLVVWNPEAEEILGGYRYLLGDEVQFDEHGKPVLATAHMFNFSEVFLKEYLPYTVELGRSFVTLEYQSTRAGSKGLFALDNLWDGLGALTVIKPNVKYFFGKMTMYPSYHRQGRDMILYFLNKHFGDKDKLITPMKPLEIETDKKMLENLFCYDSFKEDYKILNTEVRKLGYNIPPLVNAYMSLSPTMRMFGTAINYGFGDVEETGILIAVNEILEDKRVRHIESFVKQHPEAMKITSGAHPILTK.

Belongs to the acetyltransferase family.

The enzyme catalyses a (3R)-hydroxyacyl-[ACP] + glycine = a lyso-glycine lipid + holo-[ACP] + H(+). The catalysed reaction is (3R)-hydroxyhexadecanoyl-[ACP] + glycine = N-[(3R)-3-hydroxyhexadecanoyl]-glycine + holo-[ACP] + H(+). The protein operates within lipid metabolism. Is involved in the production of glycine lipids (GL), which are phosphorus-free membrane lipids. Catalyzes the first step of GL biosynthesis, i.e. the N-acylation of glycine via addition of a 3-hydroxy fatty acyl group, to form a range of monoacylated glycine (also named lyso-glycine lipids or lyso-GL). As an example, catalyzes the production of commendamide, an N-acylated (3-OH C16:0) derivative of glycine with hemolytic activity and the ability to solubilize cholesterol micelles; this compound can also activate NF-kB through the G-protein coupled receptor GPCR G2A/132. This is Glycine N(alpha)-acyltransferase from Phocaeicola vulgatus (strain ATCC 8482 / DSM 1447 / JCM 5826 / CCUG 4940 / NBRC 14291 / NCTC 11154) (Bacteroides vulgatus).